The primary structure comprises 356 residues: Nicotinate-nucleotide--dimethylbenzimidazole phosphoribosyltransferase (356 aa).

Residue Glu317 is the Proton acceptor of the active site.

It belongs to the CobT family. In terms of assembly, homodimer.

It catalyses the reaction 5,6-dimethylbenzimidazole + nicotinate beta-D-ribonucleotide = alpha-ribazole 5'-phosphate + nicotinate + H(+). The protein operates within nucleoside biosynthesis; alpha-ribazole biosynthesis; alpha-ribazole from 5,6-dimethylbenzimidazole: step 1/2. Catalyzes the synthesis of alpha-ribazole-5'-phosphate from nicotinate mononucleotide (NAMN) and 5,6-dimethylbenzimidazole (DMB). In Salmonella paratyphi A (strain ATCC 9150 / SARB42), this protein is Nicotinate-nucleotide--dimethylbenzimidazole phosphoribosyltransferase.